The chain runs to 119 residues: Holo-[acyl-carrier-protein] synthase (119 aa).

Mg(2+) is bound by residues Asp-8 and Glu-58.

It belongs to the P-Pant transferase superfamily. AcpS family. The cofactor is Mg(2+).

The protein resides in the cytoplasm. The enzyme catalyses apo-[ACP] + CoA = holo-[ACP] + adenosine 3',5'-bisphosphate + H(+). Transfers the 4'-phosphopantetheine moiety from coenzyme A to a Ser of acyl-carrier-protein. This chain is Holo-[acyl-carrier-protein] synthase, found in Bacillus cytotoxicus (strain DSM 22905 / CIP 110041 / 391-98 / NVH 391-98).